The primary structure comprises 353 residues: F-box protein At2g14290 (353 aa).

Residues 6–58 form the F-box domain; that stretch reads PRTWSELPPDLLGSIFHRLSFTDFHRAKIVCWNWNLSSKLTVPKKIRSPWLML.

This is F-box protein At2g14290 from Arabidopsis thaliana (Mouse-ear cress).